A 170-amino-acid polypeptide reads, in one-letter code: Cytochrome b6-f complex subunit 4 (170 aa).

Transmembrane regions (helical) follow at residues 36 to 56 (LLYI…GLAV), 95 to 115 (LLGV…PFLE), and 131 to 151 (TVFL…TLPI).

Belongs to the cytochrome b family. PetD subfamily. In terms of assembly, the 4 large subunits of the cytochrome b6-f complex are cytochrome b6, subunit IV (17 kDa polypeptide, petD), cytochrome f and the Rieske protein, while the 4 small subunits are petG, petL, petM and petN. The complex functions as a dimer.

Its subcellular location is the plastid. It localises to the chloroplast thylakoid membrane. In terms of biological role, component of the cytochrome b6-f complex, which mediates electron transfer between photosystem II (PSII) and photosystem I (PSI), cyclic electron flow around PSI, and state transitions. The protein is Cytochrome b6-f complex subunit 4 of Nymphaea alba (White water-lily).